Consider the following 198-residue polypeptide: Auxin-binding protein 1 (198 aa).

The first 33 residues, 1–33 (MIVLSVGSASSSPIVVVFSVALLLFYFSETSLG), serve as a signal peptide directing secretion. Cysteines 36 and 189 form a disulfide. Zn(2+) contacts are provided by His92, His94, and Glu98. Asn130 carries an N-linked (GlcNAc...) asparagine glycan. His141 serves as a coordination point for Zn(2+). A Prevents secretion from ER motif is present at residues 195–198 (KDEL).

As to quaternary structure, homodimer. May interact with the GPI-anchored plasma membrane protein SKU5 and its family members. Interacts with TMK1 (via extracellular domain). Glycosylated. In terms of processing, ubiquitinated by RMA2, leading to proteasomal degradation.

It localises to the endoplasmic reticulum lumen. The protein resides in the cell membrane. In terms of biological role, auxin receptor that controls cell elongation and cell division. Involved in embryonic morphogenesis. Acts on the cell cycle, endocycle, cell plate formation, and cell expansion and contributes to the control of auxin-related gene expression. Controls root meristem size and mediates auxin responsiveness. Involved in activation of ROP GTPases in response to auxin and regulation of clathrin-mediated endocytosis in roots. Acts as a positive factor in clathrin recruitment to the plasma membrane, thereby promoting endocytosis. Upon auxin binding, restricts the internalization of PIN proteins by inhibiting clathrin-mediated endocytosis. Promotes auxin-triggered phosphorylation status modulation of RAF-like kinases (e.g. RAF20 and RAF24). Involved in the regulation of polar auxin transport. Behaves as a negative regulator of the SCF(TIR1/AFB) signaling pathway, protecting AUX/IAA repressors from degradation. Regulates the expression of cell wall remodeling genes via an SCF(TIR1/AFB)-dependent pathway. Involved in the modulation of hemicellulose xyloglucan structure. Required for rapid auxin-mediated re-orientation of microtubules to regulate cell elongation in roots and dark-grown hypocotyls as well as asymmetric growth during gravitropic responses. Involved in the shade avoidance response. Forms with TMK1 a cell surface auxin perception complex that activates ROP signaling pathways. ABP1 sensing of auxin is important for the ABP1-TMK1 complex formation. Interacts functionally with phytochrome to regulate growth. The sequence is that of Auxin-binding protein 1 from Arabidopsis thaliana (Mouse-ear cress).